Reading from the N-terminus, the 337-residue chain is Mating-type protein MAT-2 (337 aa).

The HMG box DNA-binding region spans 125-193 (APRPMNCWII…EHLRQHPNYK (69 aa)). The interval 171-219 (KRPWQDAAQSAKEEHLRQHPNYKYTPRKPGEKKKRQSRKSKRAAATTTA) is disordered. Basic residues predominate over residues 200–212 (GEKKKRQSRKSKR).

The protein resides in the nucleus. The chain is Mating-type protein MAT-2 (MAT2) from Cochliobolus sativus (Common root rot and spot blotch fungus).